The primary structure comprises 881 residues: Envelope glycoprotein gp160 (881 aa).

The signal sequence occupies residues 1-19 (MGCLGNQLLIAILLLSVYG). Over 20–696 (IYCTQYVTVF…ASWIKYIQYG (677 aa)) the chain is Extracellular. Residue N37 is glycosylated (N-linked (GlcNAc...) asparagine; by host). A disulfide bridge connects residues C44 and C57. 17 N-linked (GlcNAc...) asparagine; by host glycosylation sites follow: N70, N114, N148, N158, N186, N200, N204, N214, N246, N249, N280, N286, N297, N308, N318, N373, and N379. Intrachain disulfides connect C101–C222, C108–C213, C113–C170, C235–C265, and C245–C257. The interval 113 to 169 (CNKSETDRWGLTKSSTTITTAAPTSAPVSEKIDMVNETSSCIAQNNCTGLEQEQMIS) is V1. Residues 170-213 (CKFTMTGLKRDKTKEYNETWYSTDLVCEQGNSTDNESRCYMNHC) form a V2 region. The V3 stretch occupies residues 313–345 (CRRPGNKTVLPVTIMSGLVFHSQPLTDRPKQAW). An intrachain disulfide couples C313 to C346. Disulfide bonds link C397–C461 and C404–C434. The segment at 404 to 434 (CKMNWFLNWVEDRDVTTQRPKERHRRNYVPC) is V4. N-linked (GlcNAc...) asparagine; by host glycans are attached at residues N462 and N478. The segment at 477–484 (GNQTSITM) is V5. The tract at residues 528 to 548 (GVFVLGFLGFLATAGSAMGAA) is fusion peptide. Residues 591 to 607 (LQTRVTAIEKYLEDQAQ) are immunosuppression. Residues N627, N636, and N652 are each glycosylated (N-linked (GlcNAc...) asparagine; by host). Positions 636-668 (NDTWQEWERKVDFLEENITALLEEAQIQQEKNM) form a coiled coil. The MPER; binding to GalCer stretch occupies residues 673 to 694 (KLNSWDVFGNWFDLASWIKYIQ). The chain crosses the membrane as a helical span at residues 697–717 (IYVVVGVILLRIVIYIVQMLA). The Cytoplasmic portion of the chain corresponds to 718–881 (KLRQGYRPVF…IRQGLELTLL (164 aa)). A YXXV motif; contains endocytosis signal motif is present at residues 723 to 726 (YRPV). Residues 737-761 (THTQQDPALPTREGKEGDGGEGGGN) form a disordered region. A lipid anchor (S-palmitoyl cysteine; by host) is attached at C789. The Di-leucine internalization motif motif lies at 880-881 (LL).

In terms of assembly, the mature envelope protein (Env) consists of a homotrimer of non-covalently associated gp120-gp41 heterodimers. The resulting complex protrudes from the virus surface as a spike. Interacts with host CD4 and CCR5. Gp120 also interacts with the C-type lectins CD209/DC-SIGN and CLEC4M/DC-SIGNR (collectively referred to as DC-SIGN(R)). As to quaternary structure, the mature envelope protein (Env) consists of a homotrimer of non-covalently associated gp120-gp41 heterodimers. The resulting complex protrudes from the virus surface as a spike. Specific enzymatic cleavages in vivo yield mature proteins. Envelope glycoproteins are synthesized as an inactive precursor that is heavily N-glycosylated and processed likely by host cell furin in the Golgi to yield the mature SU and TM proteins. The cleavage site between SU and TM requires the minimal sequence [KR]-X-[KR]-R. In terms of processing, palmitoylation of the transmembrane protein and of Env polyprotein (prior to its proteolytic cleavage) is essential for their association with host cell membrane lipid rafts. Palmitoylation is therefore required for envelope trafficking to classical lipid rafts, but not for viral replication.

The protein localises to the virion membrane. It is found in the host cell membrane. The protein resides in the host endosome membrane. The surface protein gp120 (SU) attaches the virus to the host lymphoid cell by binding to the primary receptor CD4. This interaction induces a structural rearrangement creating a high affinity binding site for a chemokine coreceptor like CCR5. This peculiar 2 stage receptor-interaction strategy allows gp120 to maintain the highly conserved coreceptor-binding site in a cryptic conformation, protected from neutralizing antibodies. These changes are transmitted to the transmembrane protein gp41 and are thought to activate its fusogenic potential by unmasking its fusion peptide. Functionally, surface protein gp120 (SU) may target the virus to gut-associated lymphoid tissue (GALT) by binding host ITGA4/ITGB7 (alpha-4/beta-7 integrins), a complex that mediates T-cell migration to the GALT. Interaction between gp120 and ITGA4/ITGB7 would allow the virus to enter GALT early in the infection, infecting and killing most of GALT's resting CD4+ T-cells. This T-cell depletion is believed to be the major insult to the host immune system leading to AIDS. Its function is as follows. The surface protein gp120 is a ligand for CD209/DC-SIGN and CLEC4M/DC-SIGNR, which are respectively found on dendritic cells (DCs), and on endothelial cells of liver sinusoids and lymph node sinuses. These interactions allow capture of viral particles at mucosal surfaces by these cells and subsequent transmission to permissive cells. DCs are professional antigen presenting cells, critical for host immunity by inducing specific immune responses against a broad variety of pathogens. They act as sentinels in various tissues where they take up antigen, process it, and present it to T-cells following migration to lymphoid organs. SIV subverts the migration properties of dendritic cells to gain access to CD4+ T-cells in lymph nodes. Virus transmission to permissive T-cells occurs either in trans (without DCs infection, through viral capture and transmission), or in cis (following DCs productive infection, through the usual CD4-gp120 interaction), thereby inducing a robust infection. In trans infection, bound virions remain infectious over days and it is proposed that they are not degraded, but protected in non-lysosomal acidic organelles within the DCs close to the cell membrane thus contributing to the viral infectious potential during DCs' migration from the periphery to the lymphoid tissues. On arrival at lymphoid tissues, intact virions recycle back to DCs' cell surface allowing virus transmission to CD4+ T-cells. Virion capture also seems to lead to MHC-II-restricted viral antigen presentation, and probably to the activation of SIV-specific CD4+ cells. In terms of biological role, the transmembrane protein gp41 (TM) acts as a class I viral fusion protein. Under the current model, the protein has at least 3 conformational states: pre-fusion native state, pre-hairpin intermediate state, and post-fusion hairpin state. During fusion of viral and target intracellular membranes, the coiled coil regions (heptad repeats) assume a trimer-of-hairpins structure, positioning the fusion peptide in close proximity to the C-terminal region of the ectodomain. The formation of this structure appears to drive apposition and subsequent fusion of viral and target cell membranes. Complete fusion occurs in host cell endosomes. The virus undergoes clathrin-dependent internalization long before endosomal fusion, thus minimizing the surface exposure of conserved viral epitopes during fusion and reducing the efficacy of inhibitors targeting these epitopes. Membranes fusion leads to delivery of the nucleocapsid into the cytoplasm. The envelope glycoprotein gp160 precursor down-modulates cell surface CD4 antigen by interacting with it in the endoplasmic reticulum and blocking its transport to the cell surface. Functionally, the gp120-gp41 heterodimer allows rapid transcytosis of the virus through CD4 negative cells such as simple epithelial monolayers of the intestinal, rectal and endocervical epithelial barriers. Both gp120 and gp41 specifically recognize glycosphingolipids galactosyl-ceramide (GalCer) or 3' sulfo-galactosyl-ceramide (GalS) present in the lipid rafts structures of epithelial cells. Binding to these alternative receptors allows the rapid transcytosis of the virus through the epithelial cells. This transcytotic vesicle-mediated transport of virions from the apical side to the basolateral side of the epithelial cells does not involve infection of the cells themselves. The polypeptide is Envelope glycoprotein gp160 (env) (Simian immunodeficiency virus (isolate K6W) (SIV-mac)).